The chain runs to 427 residues: Serine/arginine (SR)-type shuttling mRNA binding protein GBP2 (427 aa).

A disordered region spans residues 1-101; that stretch reads MERELGMYGN…GRGGGRGRTL (101 aa). Over residues 22–32 the composition is skewed to basic and acidic residues; the sequence is RLSDDRDRYDD. The residue at position 24 (Ser-24) is a Phosphoserine. Residues 35–44 show a composition bias toward low complexity; the sequence is DSSSNNGNGS. Residues 50–60 are compositionally biased toward basic and acidic residues; the sequence is DRGSRFNDRYD. 2 RRM domains span residues 122–198 and 219–296; these read NSIF…QDNP and FEVF…EGRF. A Phosphothreonine modification is found at Thr-130. A compositionally biased stretch (basic and acidic residues) spans 300–317; it reads KNNDRYNQRREDLEDTRG. The disordered stretch occupies residues 300–319; that stretch reads KNNDRYNQRREDLEDTRGTE. One can recognise an RRM 3 domain in the interval 349–426; that stretch reads CFIYCSNLPF…CSLQISYARR (78 aa).

Methylated by HMT1.

It is found in the cytoplasm. It localises to the nucleus. The protein localises to the chromosome. The protein resides in the telomere. Its subcellular location is the P-body. It is found in the stress granule. Functionally, binds to intron-containing transcripts and is involved in quality control for the export of spliced mRNAs from the nucleus. Binds to pre-mRNAs until splicing is completed or until faulty mRNAs are degraded. On correctly spliced mRNAs, GBP2 and HRB1 recruit MEX67 to allow nuclear export. On faulty mRNAs, GBP2 and HRB1 associate with the TRAMP complex that guides those pre-mRNAs to the exosome for degradation. Binds single-stranded telomeric sequences of the type (TG[1-3])n in vitro. Influences the localization of RAP1 in the nuclei. Involved in modulating telomere length. This chain is Serine/arginine (SR)-type shuttling mRNA binding protein GBP2, found in Saccharomyces cerevisiae (strain ATCC 204508 / S288c) (Baker's yeast).